The chain runs to 187 residues: ATP synthase subunit b (187 aa).

The helical transmembrane segment at 4–24 threads the bilayer; the sequence is LALFALLMVPAILLASGHDSG.

It belongs to the ATPase B chain family. In terms of assembly, F-type ATPases have 2 components, F(1) - the catalytic core - and F(0) - the membrane proton channel. F(1) has five subunits: alpha(3), beta(3), gamma(1), delta(1), epsilon(1). F(0) has three main subunits: a(1), b(2) and c(10-14). The alpha and beta chains form an alternating ring which encloses part of the gamma chain. F(1) is attached to F(0) by a central stalk formed by the gamma and epsilon chains, while a peripheral stalk is formed by the delta and b chains.

Its subcellular location is the cell inner membrane. In terms of biological role, f(1)F(0) ATP synthase produces ATP from ADP in the presence of a proton or sodium gradient. F-type ATPases consist of two structural domains, F(1) containing the extramembraneous catalytic core and F(0) containing the membrane proton channel, linked together by a central stalk and a peripheral stalk. During catalysis, ATP synthesis in the catalytic domain of F(1) is coupled via a rotary mechanism of the central stalk subunits to proton translocation. Component of the F(0) channel, it forms part of the peripheral stalk, linking F(1) to F(0). This is ATP synthase subunit b from Sulfurovum sp. (strain NBC37-1).